Consider the following 187-residue polypeptide: UPF0340 protein SPP_0683 (187 aa).

The protein belongs to the UPF0340 family.

The polypeptide is UPF0340 protein SPP_0683 (Streptococcus pneumoniae (strain P1031)).